Here is a 108-residue protein sequence, read N- to C-terminus: Large ribosomal subunit protein uL23 (108 aa).

It belongs to the universal ribosomal protein uL23 family. Part of the 50S ribosomal subunit. Contacts protein L29, and trigger factor when it is bound to the ribosome.

Its function is as follows. One of the early assembly proteins it binds 23S rRNA. One of the proteins that surrounds the polypeptide exit tunnel on the outside of the ribosome. Forms the main docking site for trigger factor binding to the ribosome. This chain is Large ribosomal subunit protein uL23, found in Albidiferax ferrireducens (strain ATCC BAA-621 / DSM 15236 / T118) (Rhodoferax ferrireducens).